Here is a 308-residue protein sequence, read N- to C-terminus: Acetylglutamate kinase (308 aa).

Residues 64 to 65, Arg-86, and Asn-192 each bind substrate; that span reads GG.

It belongs to the acetylglutamate kinase family. ArgB subfamily.

It localises to the cytoplasm. It carries out the reaction N-acetyl-L-glutamate + ATP = N-acetyl-L-glutamyl 5-phosphate + ADP. Its pathway is amino-acid biosynthesis; L-arginine biosynthesis; N(2)-acetyl-L-ornithine from L-glutamate: step 2/4. In terms of biological role, catalyzes the ATP-dependent phosphorylation of N-acetyl-L-glutamate. The polypeptide is Acetylglutamate kinase (Myxococcus xanthus (strain DK1622)).